The chain runs to 183 residues: Potassium-transporting ATPase KdpC subunit (183 aa).

A helical transmembrane segment spans residues 11–31 (LALLMTLLTGVLYPLAVTGVA).

Belongs to the KdpC family. As to quaternary structure, the system is composed of three essential subunits: KdpA, KdpB and KdpC.

It localises to the cell inner membrane. Its function is as follows. Part of the high-affinity ATP-driven potassium transport (or Kdp) system, which catalyzes the hydrolysis of ATP coupled with the electrogenic transport of potassium into the cytoplasm. This subunit acts as a catalytic chaperone that increases the ATP-binding affinity of the ATP-hydrolyzing subunit KdpB by the formation of a transient KdpB/KdpC/ATP ternary complex. This Pseudomonas putida (strain GB-1) protein is Potassium-transporting ATPase KdpC subunit.